Here is a 452-residue protein sequence, read N- to C-terminus: Bifunctional protein GlmU (452 aa).

The tract at residues 1–224 is pyrophosphorylase; it reads MNIVILAAGM…EWETHGVNSK (224 aa). Residues 6–9, lysine 20, glutamine 71, 76–77, 98–100, glycine 135, glutamate 149, asparagine 164, and asparagine 222 contribute to the UDP-N-acetyl-alpha-D-glucosamine site; these read LAAG, GT, and YGD. Aspartate 100 is a binding site for Mg(2+). Asparagine 222 contacts Mg(2+). A linker region spans residues 225–245; sequence VQLAELERIHQRNIAHALLEQ. The N-acetyltransferase stretch occupies residues 246-452; sequence GVTLADPARI…NWQRPVKIKK (207 aa). UDP-N-acetyl-alpha-D-glucosamine-binding residues include arginine 328 and lysine 346. Catalysis depends on histidine 358, which acts as the Proton acceptor. 2 residues coordinate UDP-N-acetyl-alpha-D-glucosamine: tyrosine 361 and asparagine 372. Acetyl-CoA is bound by residues alanine 375, 381 to 382, serine 400, alanine 418, and arginine 435; that span reads NY.

In the N-terminal section; belongs to the N-acetylglucosamine-1-phosphate uridyltransferase family. The protein in the C-terminal section; belongs to the transferase hexapeptide repeat family. Homotrimer. Requires Mg(2+) as cofactor.

It is found in the cytoplasm. The catalysed reaction is alpha-D-glucosamine 1-phosphate + acetyl-CoA = N-acetyl-alpha-D-glucosamine 1-phosphate + CoA + H(+). It catalyses the reaction N-acetyl-alpha-D-glucosamine 1-phosphate + UTP + H(+) = UDP-N-acetyl-alpha-D-glucosamine + diphosphate. Its pathway is nucleotide-sugar biosynthesis; UDP-N-acetyl-alpha-D-glucosamine biosynthesis; N-acetyl-alpha-D-glucosamine 1-phosphate from alpha-D-glucosamine 6-phosphate (route II): step 2/2. It participates in nucleotide-sugar biosynthesis; UDP-N-acetyl-alpha-D-glucosamine biosynthesis; UDP-N-acetyl-alpha-D-glucosamine from N-acetyl-alpha-D-glucosamine 1-phosphate: step 1/1. The protein operates within bacterial outer membrane biogenesis; LPS lipid A biosynthesis. Its function is as follows. Catalyzes the last two sequential reactions in the de novo biosynthetic pathway for UDP-N-acetylglucosamine (UDP-GlcNAc). The C-terminal domain catalyzes the transfer of acetyl group from acetyl coenzyme A to glucosamine-1-phosphate (GlcN-1-P) to produce N-acetylglucosamine-1-phosphate (GlcNAc-1-P), which is converted into UDP-GlcNAc by the transfer of uridine 5-monophosphate (from uridine 5-triphosphate), a reaction catalyzed by the N-terminal domain. In Janthinobacterium sp. (strain Marseille) (Minibacterium massiliensis), this protein is Bifunctional protein GlmU.